We begin with the raw amino-acid sequence, 343 residues long: Pentatricopeptide repeat-containing protein At1g06270 (343 aa).

PPR repeat units lie at residues 98–133, 134–169, 170–204, 205–240, 241–275, and 276–310; these read PKIV…GCLP, NPQT…GYSP, DTGT…GCIP, DVES…GISP, RKGM…DYPV, and EFES…GFIP.

It belongs to the PPR family. P subfamily.

The polypeptide is Pentatricopeptide repeat-containing protein At1g06270 (Arabidopsis thaliana (Mouse-ear cress)).